A 3902-amino-acid chain; its full sequence is Hybrid PKS-NRPS synthetase pynA (3902 aa).

The disordered stretch occupies residues 1 to 25 (MDTPLSSSEISPRFSNTVPSSVSSM). Residues 29–441 (ADPSVIVGLA…GTNAHVILDA (413 aa)) enclose the Ketosynthase family 3 (KS3) domain. Active-site for beta-ketoacyl synthase activity residues include Cys201, His324, and His362. Positions 555–868 (VFTGQGAQWF…PYLASLTRGV (314 aa)) are malonyl-CoA:ACP transacylase (MAT) domain. Ser647 acts as the For malonyltransferase activity in catalysis. The tract at residues 945–1080 (HSILGARMPG…GLVSVETNAL (136 aa)) is N-terminal hotdog fold. The dehydratase (DH) domain stretch occupies residues 945–1256 (HSILGARMPG…LEVTALGSDK (312 aa)). Residues 945–1258 (HSILGARMPG…VTALGSDKTD (314 aa)) form the PKS/mFAS DH domain. His977 serves as the catalytic Proton acceptor; for dehydratase activity. Residues 1100–1258 (QESIPAETLY…VTALGSDKTD (159 aa)) form a C-terminal hotdog fold region. The active-site Proton donor; for dehydratase activity is Asp1164. The enoyl reductase (ER) domain stretch occupies residues 1629-1945 (GLLETLVFED…MGKHTGKVVL (317 aa)). Positions 1971-2143 (TYLLVGGLGG…AGTTMNCGMI (173 aa)) are ketoreductase (KR) domain. Residues 2251–2328 (ERTTLVLSAF…ALVTKASGLI (78 aa)) enclose the Carrier 1 domain. The residue at position 2288 (Ser2288) is an O-(pantetheine 4'-phosphoryl)serine. A compositionally biased stretch (basic and acidic residues) spans 2337–2350 (KAENVDNEGAKGNE). The segment at 2337 to 2364 (KAENVDNEGAKGNEDQEVETQQGQLNQP) is disordered. Residues 2374–2816 (VPMSSFQQRL…AEVNLCGALE (443 aa)) are condensation (C) domain 7. An adenylation (A) domain 8 region spans residues 2836–3248 (SVGVCQRIME…NGLLTFKGRI (413 aa)). Residues 3391–3467 (GDDAEILQGV…AIAGMIQKQL (77 aa)) form the Carrier 2 domain. An O-(pantetheine 4'-phosphoryl)serine modification is found at Ser3427. Residues 3515 to 3774 (LTGIDTFIGL…VDFLPVDALT (260 aa)) form a thioesterase (TE) domain region.

It in the C-terminal section; belongs to the NRP synthetase family.

The protein operates within secondary metabolite biosynthesis. In terms of biological role, hybrid PKS-NRPS synthetase; part of the gene cluster that mediates the biosynthesis of pyranonigrins, a family of antioxidative compounds. The first step of pyranonigrins biosynthesis is performed by the hybrid PKS-NRPS synthetase that condenses 6 malonyl-CoA units to an acetyl starter unit, to form a 1,3,5-trioxotetradecane-6,8-dienyl-ACP. The enoyl reductase (ER) domain of pynA is likely to be functional during the first two rounds of polyketide chain extension, to generate the saturated C-C bonds of the alkyl side chain. PynA subsequently forms the amide bond between the acyl chain and L-serine. Although pynA has a terminal reductase domain, it appears to require the thioesterase pynI for the release of the straight-chain intermediate from pynA via the formation of a tetramic acid pyranonigrin J. The methyltransferase pynC then coverts pyranonigrin J to pyranonigrin I via N-methylation. The FAD-dependent monooxygenase pynG catalyzes an epoxidation-mediated cyclization to form the dihydro-gamma-pyrone moiety, followed by pynD-catalyzed oxidation of the alcohol to the ketone and enolization to yield the characteristic tetramic acid-fused gamma-pyrone core of pyranonigrin H. Pyranonigrin H is substrate of pynH for dehydration-mediated exo-methylene formation from the serine side chain to produce pyranonigrin E, before the oxidase pynE reduces the exo-methylene of pyranonigrin E into a pendant methyl to form pyranonigrin G. The FAD-linked oxidoreductase pynB performs the reverse reaction and converts pyranonigrin G back to pyranonigrin E. In Aspergillus niger (strain ATCC MYA-4892 / CBS 513.88 / FGSC A1513), this protein is Hybrid PKS-NRPS synthetase pynA.